A 284-amino-acid chain; its full sequence is Plastid-lipid-associated protein 6, chloroplastic (284 aa).

The span at 1–11 (MATSSTFSSLL) shows a compositional bias: low complexity. Residues 1–47 (MATSSTFSSLLPSPPALLSDHRSPPPSIRYSFSPLTTPKSSRLGFTV) form a disordered region. The transit peptide at 1–72 (MATSSTFSSL…SIGGESDPPP (72 aa)) directs the protein to the chloroplast. Serine 96, serine 105, serine 148, serine 151, and serine 155 each carry phosphoserine.

The protein belongs to the PAP/fibrillin family. As to quaternary structure, part of the Photosystem II light-harvesting complex (LHCII). Post-translationally, phosphorylated as part of a basal defense response.

The protein localises to the plastid. It is found in the chloroplast. Its subcellular location is the plastoglobule. In terms of biological role, required for plastoglobule development and resistance to multiple stresses. Regulates plastoglobule osmiophilic content. May be involved in the transport of lipophilic antioxidants in and out of the plastoglobule. This Arabidopsis thaliana (Mouse-ear cress) protein is Plastid-lipid-associated protein 6, chloroplastic.